Consider the following 393-residue polypeptide: Riboflavin biosynthesis protein RibBA (393 aa).

The segment at 1-200 is DHBP synthase; it reads MEFDEIKDAL…IESLVNYQKD (200 aa). Residues 27–28, D32, 139–143, and E163 contribute to the D-ribulose 5-phosphate site; these read RE and RTGHT. E28 is a binding site for Mg(2+). Position 142 (H142) interacts with Mg(2+). The segment at 201–393 is GTP cyclohydrolase II; that stretch reads KDTSVELKAK…TKKIKMGHLI (193 aa). Position 249-253 (249-253) interacts with GTP; that stretch reads RIHSA. C254, C265, and C267 together coordinate Zn(2+). Residues Q270, 291–293, and T313 contribute to the GTP site; that span reads EGR. The active-site Proton acceptor; for GTP cyclohydrolase activity is the D325. R327 (nucleophile; for GTP cyclohydrolase activity) is an active-site residue. Residues S348 and K353 each contribute to the GTP site.

This sequence in the N-terminal section; belongs to the DHBP synthase family. The protein in the C-terminal section; belongs to the GTP cyclohydrolase II family. The cofactor is Mg(2+). Mn(2+) is required as a cofactor. Zn(2+) serves as cofactor.

It carries out the reaction D-ribulose 5-phosphate = (2S)-2-hydroxy-3-oxobutyl phosphate + formate + H(+). The enzyme catalyses GTP + 4 H2O = 2,5-diamino-6-hydroxy-4-(5-phosphoribosylamino)-pyrimidine + formate + 2 phosphate + 3 H(+). It participates in cofactor biosynthesis; riboflavin biosynthesis; 2-hydroxy-3-oxobutyl phosphate from D-ribulose 5-phosphate: step 1/1. Its pathway is cofactor biosynthesis; riboflavin biosynthesis; 5-amino-6-(D-ribitylamino)uracil from GTP: step 1/4. In terms of biological role, catalyzes the conversion of D-ribulose 5-phosphate to formate and 3,4-dihydroxy-2-butanone 4-phosphate. Functionally, catalyzes the conversion of GTP to 2,5-diamino-6-ribosylamino-4(3H)-pyrimidinone 5'-phosphate (DARP), formate and pyrophosphate. In Staphylococcus haemolyticus (strain JCSC1435), this protein is Riboflavin biosynthesis protein RibBA.